Consider the following 1072-residue polypeptide: DNA-directed RNA polymerase subunit beta (1072 aa).

It belongs to the RNA polymerase beta chain family. As to quaternary structure, in plastids the minimal PEP RNA polymerase catalytic core is composed of four subunits: alpha, beta, beta', and beta''. When a (nuclear-encoded) sigma factor is associated with the core the holoenzyme is formed, which can initiate transcription.

Its subcellular location is the plastid. The protein resides in the chloroplast. It carries out the reaction RNA(n) + a ribonucleoside 5'-triphosphate = RNA(n+1) + diphosphate. Its function is as follows. DNA-dependent RNA polymerase catalyzes the transcription of DNA into RNA using the four ribonucleoside triphosphates as substrates. The polypeptide is DNA-directed RNA polymerase subunit beta (Barbarea verna (Land cress)).